Reading from the N-terminus, the 212-residue chain is Ribosomal RNA small subunit methyltransferase G (212 aa).

S-adenosyl-L-methionine is bound by residues Gly73, 127–128, and Arg143; that span reads IE.

It belongs to the methyltransferase superfamily. RNA methyltransferase RsmG family.

The protein resides in the cytoplasm. It carries out the reaction guanosine(527) in 16S rRNA + S-adenosyl-L-methionine = N(7)-methylguanosine(527) in 16S rRNA + S-adenosyl-L-homocysteine. In terms of biological role, specifically methylates the N7 position of guanine in position 527 of 16S rRNA. The sequence is that of Ribosomal RNA small subunit methyltransferase G from Methylobacterium sp. (strain 4-46).